Consider the following 126-residue polypeptide: uncharacterized protein (126 aa).

This is an uncharacterized protein from Homo sapiens (Human).